The primary structure comprises 887 residues: Protein SIP5 (887 aa).

Disordered regions lie at residues Met-1 to Glu-77, Pro-168 to Lys-226, Ser-381 to Val-415, Ser-463 to Arg-521, Ala-542 to Gly-608, Ser-623 to Glu-746, and Arg-778 to Val-854. Residues Asp-44 to Thr-53 are compositionally biased toward gly residues. Residues Pro-61–Glu-77 show a composition bias toward basic and acidic residues. A compositionally biased stretch (polar residues) spans Arg-193 to Gly-207. The segment covering Ser-381–Ser-390 has biased composition (low complexity). Composition is skewed to polar residues over residues Pro-391–Val-415 and Ser-495–Asp-504. Composition is skewed to basic and acidic residues over residues Gln-505–Arg-521 and Glu-543–Ala-568. The segment covering Gly-581–Gly-600 has biased composition (low complexity). The segment covering Asn-634–Asp-643 has biased composition (basic and acidic residues). The span at Arg-686–His-711 shows a compositional bias: polar residues. Residues Arg-716 to Gly-727 show a composition bias toward low complexity. Basic and acidic residues predominate over residues Glu-798–Pro-813. The span at Ile-836 to Val-854 shows a compositional bias: polar residues.

This sequence belongs to the SIP5 family.

The protein localises to the cytoplasm. Its function is as follows. May negatively regulate the SNF1 kinase. This is Protein SIP5 (SIP5) from Chaetomium globosum (strain ATCC 6205 / CBS 148.51 / DSM 1962 / NBRC 6347 / NRRL 1970) (Soil fungus).